We begin with the raw amino-acid sequence, 289 residues long: Acetyl-coenzyme A carboxylase carboxyl transferase subunit beta (289 aa).

Residues 28–289 (VMTKCPKCKK…QGGEMAVWQS (262 aa)) form the CoA carboxyltransferase N-terminal domain. Zn(2+)-binding residues include Cys32, Cys35, Cys51, and Cys54. A C4-type zinc finger spans residues 32-54 (CPKCKKIMYTKELLKNLKVCVNC).

This sequence belongs to the AccD/PCCB family. As to quaternary structure, acetyl-CoA carboxylase is a heterohexamer composed of biotin carboxyl carrier protein (AccB), biotin carboxylase (AccC) and two subunits each of ACCase subunit alpha (AccA) and ACCase subunit beta (AccD). The cofactor is Zn(2+).

The protein resides in the cytoplasm. It catalyses the reaction N(6)-carboxybiotinyl-L-lysyl-[protein] + acetyl-CoA = N(6)-biotinyl-L-lysyl-[protein] + malonyl-CoA. Its pathway is lipid metabolism; malonyl-CoA biosynthesis; malonyl-CoA from acetyl-CoA: step 1/1. Its function is as follows. Component of the acetyl coenzyme A carboxylase (ACC) complex. Biotin carboxylase (BC) catalyzes the carboxylation of biotin on its carrier protein (BCCP) and then the CO(2) group is transferred by the transcarboxylase to acetyl-CoA to form malonyl-CoA. This Bacillus cereus (strain ATCC 10987 / NRS 248) protein is Acetyl-coenzyme A carboxylase carboxyl transferase subunit beta.